The sequence spans 208 residues: Interleukin-6 (208 aa).

Residues 1-29 (MNSLFTSAFSPLAVSLGLLLVMTSAFPTP) form the signal peptide. Residue N38 is glycosylated (N-linked (GlcNAc...) asparagine). An intrachain disulfide couples C72 to C78. S81 bears the Phosphoserine mark. C101 and C111 are disulfide-bonded.

This sequence belongs to the IL-6 superfamily. Component of a hexamer of two molecules each of IL6, IL6R and IL6ST; first binds to IL6R to associate with the signaling subunit IL6ST. Interacts with IL6R (via the N-terminal ectodomain); this interaction may be affected by IL6R-binding with SORL1, hence decreasing IL6 cis signaling. Interacts with SORL1 (via the N-terminal ectodomain); this interaction leads to IL6 internalization and lysosomal degradation. May form a trimeric complex with the soluble SORL1 ectodomain and soluble IL6R receptor; this interaction might stabilize circulating IL6, hence promoting IL6 trans signaling.

It is found in the secreted. Its function is as follows. Cytokine with a wide variety of biological functions in immunity, tissue regeneration, and metabolism. Binds to IL6R, then the complex associates to the signaling subunit IL6ST/gp130 to trigger the intracellular IL6-signaling pathway. The interaction with the membrane-bound IL6R and IL6ST stimulates 'classic signaling', whereas the binding of IL6 and soluble IL6R to IL6ST stimulates 'trans-signaling'. Alternatively, 'cluster signaling' occurs when membrane-bound IL6:IL6R complexes on transmitter cells activate IL6ST receptors on neighboring receiver cells. Functionally, IL6 is a potent inducer of the acute phase response. Rapid production of IL6 contributes to host defense during infection and tissue injury, but excessive IL6 synthesis is involved in disease pathology. In the innate immune response, is synthesized by myeloid cells, such as macrophages and dendritic cells, upon recognition of pathogens through toll-like receptors (TLRs) at the site of infection or tissue injury. In the adaptive immune response, is required for the differentiation of B cells into immunoglobulin-secreting cells. Plays a major role in the differentiation of CD4(+) T cell subsets. Essential factor for the development of T follicular helper (Tfh) cells that are required for the induction of germinal-center formation. Required to drive naive CD4(+) T cells to the Th17 lineage. Also required for proliferation of myeloma cells and the survival of plasmablast cells. In terms of biological role, acts as an essential factor in bone homeostasis and on vessels directly or indirectly by induction of VEGF, resulting in increased angiogenesis activity and vascular permeability. Induces, through 'trans-signaling' and synergistically with IL1B and TNF, the production of VEGF. Involved in metabolic controls, is discharged into the bloodstream after muscle contraction increasing lipolysis and improving insulin resistance. 'Trans-signaling' in central nervous system also regulates energy and glucose homeostasis. Mediates, through GLP-1, crosstalk between insulin-sensitive tissues, intestinal L cells and pancreatic islets to adapt to changes in insulin demand. Also acts as a myokine. Plays a protective role during liver injury, being required for maintenance of tissue regeneration. Also has a pivotal role in iron metabolism by regulating HAMP/hepcidin expression upon inflammation or bacterial infection. Through activation of IL6ST-YAP-NOTCH pathway, induces inflammation-induced epithelial regeneration. This is Interleukin-6 (IL6) from Capra hircus (Goat).